A 406-amino-acid polypeptide reads, in one-letter code: Sorting nexin-6 (406 aa).

Methionine 1 bears the N-acetylmethionine mark. Methionine 2 carries the N-acetylmethionine; in Sorting nexin-6, N-terminally processed modification. The segment at 2–179 (MEGLDDGPDF…NQDLSVRGKN (178 aa)) is interaction with PIM1. Residues 26 to 173 (LQSDAALQVD…HVFLEYNQDL (148 aa)) enclose the PX domain. A 1,2-diacyl-sn-glycero-3-phospho-(1D-myo-inositol-4,5-bisphosphate) contacts are provided by residues 41-47 (SERDKVK), 100-106 (FDASREK), and 114-117 (EGSM). Phosphoserine occurs at positions 116 and 194. The membrane-binding amphipathic helix stretch occupies residues 182 to 199 (EKLEDFFKNMVKSADGVI). Residues 203 to 406 (VKDVDDFFEH…NCLAVLNGDT (204 aa)) enclose the BAR domain.

This sequence belongs to the sorting nexin family. As to quaternary structure, forms heterodimers with BAR domain-containing sorting nexins SNX1 and SNX2. The heterodimers are proposed to self-assemble into helical arrays on the membrane to stabilize and expand local membrane curvature underlying endosomal tubule formation. Thought to be a component of the originally described retromer complex (also called SNX-BAR retromer) which is a pentamer containing the heterotrimeric retromer cargo-selective complex (CSC), also described as vacuolar protein sorting subcomplex (VPS), and a heterodimeric membrane-deforming subcomplex formed between SNX1 or SNX2 and SNX5 or SNX6 (also called SNX-BAR subcomplex); the respective CSC and SNX-BAR subcomplexes associate with low affinity. Interacts with SNX1, SNX2, VPS26A, VPS29, VPS35, CDKN1B, TGFB receptors, BACE1, BRMS1, PIP5K1C isoform 3. Interacts with DCTN1; the association with DCTN1 is involved in movement of retromer-c ontaining vesicles toward the TGN. Interacts with CDKN1B and GIT1. Interacts with PIM1; translocating SNX6 to the nucleus. Post-translationally, in vitro phosphorylated by PIM1; not affecting PIM1-dependent nuclear translocation.

It localises to the early endosome. The protein resides in the early endosome membrane. The protein localises to the cytoplasmic vesicle. Its subcellular location is the cytoplasm. It is found in the nucleus. Involved in several stages of intracellular trafficking. Interacts with membranes phosphatidylinositol 3,4-bisphosphate and/or phosphatidylinositol 4,5-bisphosphate. Acts in part as component of the retromer membrane-deforming SNX-BAR subcomplex. The SNX-BAR retromer mediates retrograde transport of cargo proteins from endosomes to the trans-Golgi network (TGN) and is involved in endosome-to-plasma membrane transport for cargo protein recycling. The SNX-BAR subcomplex functions to deform the donor membrane into a tubular profile called endosome-to-TGN transport carrier (ETC). Does not have in vitro vesicle-to-membrane remodeling activity. Involved in retrograde endosome-to-TGN transport of lysosomal enzyme receptor IGF2R. May function as link between transport vesicles and dynactin. Negatively regulates retrograde transport of BACE1 from the cell surface to the trans-Golgi network. Involved in E-cadherin sorting and degradation; inhibits PIP5K1C isoform 3-mediated E-cadherin degradation. In association with GIT1 involved in EGFR degradation. Promotes lysosomal degradation of CDKN1B. May contribute to transcription regulation. This Homo sapiens (Human) protein is Sorting nexin-6 (SNX6).